The sequence spans 751 residues: Lanosterol synthase erg7A (751 aa).

Residues 1 to 22 (MTGGPIASWRTAAQGHLTPDEN) form a disordered region. The stretch at 147–189 (ATEIKRYLFARQHPEDGGWGLHIEAHSSVFGTCMNYVALRLIG) is one PFTB 1 repeat. The active-site Proton donor is the D481. PFTB repeat units lie at residues 508–553 (LKDS…MIGY), 585–625 (KDKA…ASVG), and 634–675 (ARRG…VQTA).

The protein belongs to the terpene cyclase/mutase family.

It localises to the lipid droplet. The protein localises to the endoplasmic reticulum membrane. The catalysed reaction is (S)-2,3-epoxysqualene = lanosterol. The protein operates within steroid metabolism; ergosterol biosynthesis. Its function is as follows. Lanosterol synthase; part of the third module of ergosterol biosynthesis pathway that includes the late steps of the pathway. ERG7A and ERG7B catalyze the cyclization of (S)-2,3 oxidosqualene to lanosterol, a reaction that forms the sterol core. The third module or late pathway involves the ergosterol synthesis itself through consecutive reactions that mainly occur in the endoplasmic reticulum (ER) membrane. Firstly, the squalene synthase erg9 catalyzes the condensation of 2 farnesyl pyrophosphate moieties to form squalene, which is the precursor of all steroids. Squalene synthase is crucial for balancing the incorporation of farnesyl diphosphate (FPP) into sterol and nonsterol isoprene synthesis. Secondly, squalene is converted into lanosterol by the consecutive action of the squalene epoxidase erg1 and the lanosterol synthase erg7. Then, the delta(24)-sterol C-methyltransferase erg6 methylates lanosterol at C-24 to produce eburicol. Eburicol is the substrate of the sterol 14-alpha demethylase encoded by cyp51A and cyp51B, to yield 4,4,24-trimethyl ergosta-8,14,24(28)-trienol. The C-14 reductase erg24 then reduces the C14=C15 double bond which leads to 4,4-dimethylfecosterol. A sequence of further demethylations at C-4, involving the C-4 demethylation complex containing the C-4 methylsterol oxidases erg25A or erg25B, the sterol-4-alpha-carboxylate 3-dehydrogenase erg26 and the 3-keto-steroid reductase erg27, leads to the production of fecosterol via 4-methylfecosterol. The C-8 sterol isomerase erg2 then catalyzes the reaction which results in unsaturation at C-7 in the B ring of sterols and thus converts fecosterol to episterol. The sterol-C5-desaturase erg3B then catalyzes the introduction of a C-5 double bond in the B ring to produce 5-dehydroepisterol. The 2 other sterol-C5-desaturases, erg3A and erg3C, seem to be less important in ergosterol biosynthesis. The C-22 sterol desaturase erg5 further converts 5-dehydroepisterol into ergosta-5,7,22,24(28)-tetraen-3beta-ol by forming the C-22(23) double bond in the sterol side chain. Finally, ergosta-5,7,22,24(28)-tetraen-3beta-ol is substrate of the C-24(28) sterol reductases erg4A and erg4B to produce ergosterol. Possible alternative sterol biosynthetic pathways might exist from fecosterol to ergosterol, depending on the activities of the erg3 isoforms. The chain is Lanosterol synthase erg7A from Aspergillus fumigatus (strain ATCC MYA-4609 / CBS 101355 / FGSC A1100 / Af293) (Neosartorya fumigata).